A 147-amino-acid chain; its full sequence is Ribonuclease H (147 aa).

Positions 8, 46, 68, and 132 each coordinate Mg(2+).

Belongs to the RNase H family. As to quaternary structure, monomer. It depends on Mg(2+) as a cofactor.

The protein localises to the cytoplasm. The enzyme catalyses Endonucleolytic cleavage to 5'-phosphomonoester.. Endonuclease that specifically degrades the RNA of RNA-DNA hybrids. This is Ribonuclease H from Geotalea uraniireducens (strain Rf4) (Geobacter uraniireducens).